A 311-amino-acid chain; its full sequence is MPSTIEAIYIILIAGELTIGIWGNGFIVLVNCIDWLKRRDVSLIDIILISLAISRICLLCVISLDGFFILLFPGTYDTNVLESIMDAVWTFANNSSLWFTSCLSIFYLLKIANISHPFFFWLKLKINKVILAILLGSFLISLIISFPINGMWYNLFKVSHEENITWAFKVSTIPGAFKQLTLNLGAMVPFILCLISFFLLLFSLVRHTKQIQLHATGFRDPSTEAHMRAVKAVIIFLLLLILYYPVFLVMTSSTLIPQGKLVLMIGDIVTVIFPSSHSFILIMGNSKLRAAFLKMLRFVKGFLRRRKPFVP.

The Extracellular segment spans residues 1-9 (MPSTIEAIY). The chain crosses the membrane as a helical span at residues 10–32 (IILIAGELTIGIWGNGFIVLVNC). Residues 33 to 52 (IDWLKRRDVSLIDIILISLA) lie on the Cytoplasmic side of the membrane. The chain crosses the membrane as a helical span at residues 53–72 (ISRICLLCVISLDGFFILLF). Topologically, residues 73–86 (PGTYDTNVLESIMD) are extracellular. Residues 87 to 109 (AVWTFANNSSLWFTSCLSIFYLL) form a helical membrane-spanning segment. Residues 110–128 (KIANISHPFFFWLKLKINK) lie on the Cytoplasmic side of the membrane. Residues 129–146 (VILAILLGSFLISLIISF) traverse the membrane as a helical segment. The Extracellular segment spans residues 147–179 (PINGMWYNLFKVSHEENITWAFKVSTIPGAFKQ). An N-linked (GlcNAc...) asparagine glycan is attached at Asn163. The helical transmembrane segment at 180 to 202 (LTLNLGAMVPFILCLISFFLLLF) threads the bilayer. Topologically, residues 203 to 233 (SLVRHTKQIQLHATGFRDPSTEAHMRAVKAV) are cytoplasmic. A helical transmembrane segment spans residues 234–256 (IIFLLLLILYYPVFLVMTSSTLI). The Extracellular portion of the chain corresponds to 257-260 (PQGK). The chain crosses the membrane as a helical span at residues 261 to 283 (LVLMIGDIVTVIFPSSHSFILIM). At 284-311 (GNSKLRAAFLKMLRFVKGFLRRRKPFVP) the chain is on the cytoplasmic side.

This sequence belongs to the G-protein coupled receptor T2R family.

Its subcellular location is the membrane. In terms of biological role, gustducin-coupled receptor implicated in the perception of bitter compounds in the oral cavity and the gastrointestinal tract. Signals through PLCB2 and the calcium-regulated cation channel TRPM5. The sequence is that of Taste receptor type 2 member 9 (TAS2R9) from Macaca mulatta (Rhesus macaque).